Here is a 242-residue protein sequence, read N- to C-terminus: tRNA pseudouridine synthase A (242 aa).

Asp51 serves as the catalytic Nucleophile. Tyr107 lines the substrate pocket.

The protein belongs to the tRNA pseudouridine synthase TruA family. In terms of assembly, homodimer.

The catalysed reaction is uridine(38/39/40) in tRNA = pseudouridine(38/39/40) in tRNA. Functionally, formation of pseudouridine at positions 38, 39 and 40 in the anticodon stem and loop of transfer RNAs. The polypeptide is tRNA pseudouridine synthase A (Helicobacter pylori (strain G27)).